A 404-amino-acid chain; its full sequence is Probable tRNA sulfurtransferase (404 aa).

The 106-residue stretch at 60–165 folds into the THUMP domain; that stretch reads TAVAESLKQV…EEAAYLSYET (106 aa). Residues 183–184, 208–209, Arg265, Gly287, and Gln296 contribute to the ATP site; these read ML and HF.

The protein belongs to the ThiI family.

The protein localises to the cytoplasm. The catalysed reaction is [ThiI sulfur-carrier protein]-S-sulfanyl-L-cysteine + a uridine in tRNA + 2 reduced [2Fe-2S]-[ferredoxin] + ATP + H(+) = [ThiI sulfur-carrier protein]-L-cysteine + a 4-thiouridine in tRNA + 2 oxidized [2Fe-2S]-[ferredoxin] + AMP + diphosphate. It catalyses the reaction [ThiS sulfur-carrier protein]-C-terminal Gly-Gly-AMP + S-sulfanyl-L-cysteinyl-[cysteine desulfurase] + AH2 = [ThiS sulfur-carrier protein]-C-terminal-Gly-aminoethanethioate + L-cysteinyl-[cysteine desulfurase] + A + AMP + 2 H(+). The protein operates within cofactor biosynthesis; thiamine diphosphate biosynthesis. In terms of biological role, catalyzes the ATP-dependent transfer of a sulfur to tRNA to produce 4-thiouridine in position 8 of tRNAs, which functions as a near-UV photosensor. Also catalyzes the transfer of sulfur to the sulfur carrier protein ThiS, forming ThiS-thiocarboxylate. This is a step in the synthesis of thiazole, in the thiamine biosynthesis pathway. The sulfur is donated as persulfide by IscS. The chain is Probable tRNA sulfurtransferase from Streptococcus pneumoniae (strain 70585).